A 542-amino-acid polypeptide reads, in one-letter code: MLIKGNILNVFTDEIYPGEIKIEHGIIESIKEVNADFNDIIVPGFIDAHIHIESSMLTPSRFAEIALRHGTTSVIADPHEIANVMGMDGIDYMIDDAKKTPLKYYFTAPSCVPATKFEKSGATISPNIIDNLLSRPEFVALGEVMDYNAVISNEKSILEKIKIAKKYHKPIDGHAPLLSGKNLQKYVKHGVITDHESTTKKEVAEKKRMGMKIMIREGSESKMLEKLIYSNCDFIVSDDLKPEDLINGHLDKCLRKAVDYGMDPYEAIKLVTINPAEHYNLNAGSISPGKSADLVFIDNLRDFTVKRVVINGNTIFKKQKLLFRANPRPIDTTLHVSLTKPEDFDLKAQNPAHKSATVNLINVSDNTIITKQSSAKLSIQKKTIIPSVFEDILKISVVDRYGGNTISNGFVKGFGIKNGAIASSVSHDSHNIIVVGTNSEYMSRATNHLIENKGGLAAISNQAKLDVTLPIAGLMSDKPAKVVANNSAKLNELVSNMGCELSSPFTSLSFMALPVVPEVKMTTNGLFNVNTHQFIDIIKEEK.

It belongs to the metallo-dependent hydrolases superfamily. Adenine deaminase family. It depends on Mn(2+) as a cofactor.

It catalyses the reaction adenine + H2O + H(+) = hypoxanthine + NH4(+). This Methanosphaera stadtmanae (strain ATCC 43021 / DSM 3091 / JCM 11832 / MCB-3) protein is Adenine deaminase.